Reading from the N-terminus, the 272-residue chain is 2-dehydro-3-deoxyphosphooctonate aldolase (272 aa).

The protein belongs to the KdsA family.

The protein resides in the cytoplasm. The enzyme catalyses D-arabinose 5-phosphate + phosphoenolpyruvate + H2O = 3-deoxy-alpha-D-manno-2-octulosonate-8-phosphate + phosphate. It participates in carbohydrate biosynthesis; 3-deoxy-D-manno-octulosonate biosynthesis; 3-deoxy-D-manno-octulosonate from D-ribulose 5-phosphate: step 2/3. It functions in the pathway bacterial outer membrane biogenesis; lipopolysaccharide biosynthesis. This Geotalea uraniireducens (strain Rf4) (Geobacter uraniireducens) protein is 2-dehydro-3-deoxyphosphooctonate aldolase.